The sequence spans 51 residues: SPbeta prophage-derived uncharacterized protein YorQ (51 aa).

In Bacillus subtilis (strain 168), this protein is SPbeta prophage-derived uncharacterized protein YorQ (yorQ).